The primary structure comprises 289 residues: Release factor glutamine methyltransferase (289 aa).

Residues 122–126 (GVGSG), aspartate 145, tryptophan 174, and asparagine 189 contribute to the S-adenosyl-L-methionine site. 189–192 (NPPY) serves as a coordination point for substrate.

The protein belongs to the protein N5-glutamine methyltransferase family. PrmC subfamily.

The enzyme catalyses L-glutaminyl-[peptide chain release factor] + S-adenosyl-L-methionine = N(5)-methyl-L-glutaminyl-[peptide chain release factor] + S-adenosyl-L-homocysteine + H(+). Its function is as follows. Methylates the class 1 translation termination release factors RF1/PrfA and RF2/PrfB on the glutamine residue of the universally conserved GGQ motif. The protein is Release factor glutamine methyltransferase of Caulobacter vibrioides (strain ATCC 19089 / CIP 103742 / CB 15) (Caulobacter crescentus).